A 56-amino-acid chain; its full sequence is Mitoregulin (56 aa).

The Mitochondrial matrix segment spans residues 2 to 9; that stretch reads ADVSERTL. The helical transmembrane segment at 10–27 threads the bilayer; the sequence is QLSVLVAFASGVLLGWQA. Residues 28 to 56 are Mitochondrial intermembrane-facing; it reads NRLRRRYLDWRKRRLQDKLAATQKKLDLA.

In terms of assembly, interacts with mitochondrial trifunctional enzyme, a heterotetrameric complex composed of 2 HADHA subunits and 2 HADHB subunits. Interacts with cytochrome b5 reductase CYB5R3; the interaction is required to maintain cellular lipid composition and leads to stimulation of mitochondrial respiratory complex I activity. Interacts with ATP synthase subunit ATP5F1B/ATP5B.

Its subcellular location is the mitochondrion inner membrane. Its function is as follows. Positively regulates mitochondrial complex assembly and/or stability. Increases mitochondrial membrane potential while decreasing mitochondrial reactive oxygen species. Increases mitochondrial respiration rate. Increased mitochondrial respiratory activity promotes myogenic differentiation which facilitates muscle growth and regeneration. Increases mitochondrial calcium retention capacity. Plays a role in maintenance of cellular lipid composition through its interaction with cytochrome b5 reductase CYB5R3 which is required for mitochondrial respiratory complex I activity. Interacts with the mitochondrial trifunctional enzyme complex (MTE) and enhances fatty acid beta-oxidation. Not required for MTE formation or stability. Modulates triglyceride clearance in adipocytes through its role in regulating fatty acid beta-oxidation and lipolysis. This Homo sapiens (Human) protein is Mitoregulin.